Reading from the N-terminus, the 337-residue chain is Ferrochelatase (337 aa).

Positions 189 and 293 each coordinate Fe cation.

It belongs to the ferrochelatase family.

The protein localises to the cytoplasm. It carries out the reaction heme b + 2 H(+) = protoporphyrin IX + Fe(2+). It participates in porphyrin-containing compound metabolism; protoheme biosynthesis; protoheme from protoporphyrin-IX: step 1/1. Its function is as follows. Catalyzes the ferrous insertion into protoporphyrin IX. The polypeptide is Ferrochelatase (Pseudomonas entomophila (strain L48)).